We begin with the raw amino-acid sequence, 122 residues long: Large ribosomal subunit protein uL14 (122 aa).

The protein belongs to the universal ribosomal protein uL14 family. As to quaternary structure, part of the 50S ribosomal subunit. Forms a cluster with proteins L3 and L19. In the 70S ribosome, L14 and L19 interact and together make contacts with the 16S rRNA in bridges B5 and B8.

Functionally, binds to 23S rRNA. Forms part of two intersubunit bridges in the 70S ribosome. The protein is Large ribosomal subunit protein uL14 of Staphylococcus haemolyticus (strain JCSC1435).